A 431-amino-acid polypeptide reads, in one-letter code: 5-methylthioadenosine/S-adenosylhomocysteine deaminase (431 aa).

The Zn(2+) site is built by H64 and H66. Positions 93, 145, and 183 each coordinate substrate. Residue H210 participates in Zn(2+) binding. Substrate-binding residues include E213 and D299. D299 is a binding site for Zn(2+).

It belongs to the metallo-dependent hydrolases superfamily. MTA/SAH deaminase family. It depends on Zn(2+) as a cofactor.

The catalysed reaction is S-adenosyl-L-homocysteine + H2O + H(+) = S-inosyl-L-homocysteine + NH4(+). It carries out the reaction S-methyl-5'-thioadenosine + H2O + H(+) = S-methyl-5'-thioinosine + NH4(+). Its function is as follows. Catalyzes the deamination of 5-methylthioadenosine and S-adenosyl-L-homocysteine into 5-methylthioinosine and S-inosyl-L-homocysteine, respectively. Is also able to deaminate adenosine. This is 5-methylthioadenosine/S-adenosylhomocysteine deaminase from Syntrophomonas wolfei subsp. wolfei (strain DSM 2245B / Goettingen).